The primary structure comprises 492 residues: Stage IV sporulation protein A (492 aa).

A Walker A motif; involved in ATP-binding motif is present at residues 24-31 (GAVRTGKS). Residue 24–31 (GAVRTGKS) participates in ATP binding.

It is found in the cytoplasm. It catalyses the reaction ATP + H2O = ADP + phosphate + H(+). Its function is as follows. ATPase. Has a role at an early stage in the morphogenesis of the spore coat outer layers. Directs the assembly of the coat and exosporium to an area around the forespore. The chain is Stage IV sporulation protein A from Bacillus anthracis.